A 529-amino-acid chain; its full sequence is MQQRRPVRRALLSVSDKAGIIEFAQALSARGVELLSTGGTARLLAEKGLAVTEVSDYTGFPEMMDGRVKTLHPKVHGGILGRRGQDDAIMEQHHIAPIDMVVVNLYPFAETVARVGCSLEDAVENIDIGGPTMVRSAAKNHKDVAIVVKSSDYDAIIKEMDANEGSLTLDTRFDLSIKAFEHTAAYDSMIANYFGSMVPAYHGESKEAAGRFPRTLNLNFIKKQDMRYGENSHQQAAFYIEENVKEASVATAQQVQGKALSYNNIADTDAALECVKAFNEPACVIVKHANPCGVAVSTSILDAYDRAYKTDPTSAFGGIIAFNRELDAETAQAIISRQFVEVIIAPSATEEALKITAAKQNVRVLTCGQWAQRVPGLDFKRVNGGLLVQDRDLGMVSEAELRVVSKRQPTEQELRDALFCWKVAKFVKSNAIVYAKENMTIGIGAGQMSRVYSAKIAGIKAADEGLEVKGSAMASDAFFPFRDGIDAAAAVGVSCVIQPGGSIRDDEVIAAADEHGIAMIFTDMRHFRH.

Residues Met-1 to Val-148 enclose the MGS-like domain.

It belongs to the PurH family.

The enzyme catalyses (6R)-10-formyltetrahydrofolate + 5-amino-1-(5-phospho-beta-D-ribosyl)imidazole-4-carboxamide = 5-formamido-1-(5-phospho-D-ribosyl)imidazole-4-carboxamide + (6S)-5,6,7,8-tetrahydrofolate. The catalysed reaction is IMP + H2O = 5-formamido-1-(5-phospho-D-ribosyl)imidazole-4-carboxamide. Its pathway is purine metabolism; IMP biosynthesis via de novo pathway; 5-formamido-1-(5-phospho-D-ribosyl)imidazole-4-carboxamide from 5-amino-1-(5-phospho-D-ribosyl)imidazole-4-carboxamide (10-formyl THF route): step 1/1. The protein operates within purine metabolism; IMP biosynthesis via de novo pathway; IMP from 5-formamido-1-(5-phospho-D-ribosyl)imidazole-4-carboxamide: step 1/1. The protein is Bifunctional purine biosynthesis protein PurH of Salmonella enteritidis PT4 (strain P125109).